The chain runs to 162 residues: Cyclic pyranopterin monophosphate synthase (162 aa).

Residues 79–81 and 117–118 contribute to the substrate site; these read LCH and ME. D132 is a catalytic residue.

This sequence belongs to the MoaC family. Homohexamer; trimer of dimers.

The enzyme catalyses (8S)-3',8-cyclo-7,8-dihydroguanosine 5'-triphosphate = cyclic pyranopterin phosphate + diphosphate. It participates in cofactor biosynthesis; molybdopterin biosynthesis. Functionally, catalyzes the conversion of (8S)-3',8-cyclo-7,8-dihydroguanosine 5'-triphosphate to cyclic pyranopterin monophosphate (cPMP). The polypeptide is Cyclic pyranopterin monophosphate synthase (Bordetella petrii (strain ATCC BAA-461 / DSM 12804 / CCUG 43448)).